Here is a 348-residue protein sequence, read N- to C-terminus: Nuclear receptor subfamily 1 group I member 3 (348 aa).

Residues 8–83 (PRSCMVCGDR…AGMKKEMILS (76 aa)) constitute a DNA-binding region (nuclear receptor). An NR C4-type zinc finger spans residues 11 to 31 (CMVCGDRATGYHFHALTCEGC). Residue Thr38 is modified to Phosphothreonine; by PKC. An NR C4-type zinc finger spans residues 47–71 (CPFAGNCKVNKAQRRHCPACRLQKC). Residues 109-348 (GQQELVQTLL…MMPLLQEICS (240 aa)) enclose the NR LBD domain.

It belongs to the nuclear hormone receptor family. NR1 subfamily. Heterodimer of NR1I3 and RXR. Interacts with PSMC4. Interacts with ECT2. Directly interacts with DNAJC7; this complex may also include HSP90. Interacts with CRY1. Interacts with CRY2 in a ligand-dependent manner. Phosphorylated at Thr-38 by PKC, dephosphorylation of Thr-38 is required for nuclear translocation and activation.

The protein localises to the nucleus. The protein resides in the cytoplasm. Its subcellular location is the cytoskeleton. Binds and transactivates the retinoic acid response elements that control expression of the retinoic acid receptor beta 2 and alcohol dehydrogenase 3 genes. Transactivates both the phenobarbital responsive element module of the human CYP2B6 gene and the CYP3A4 xenobiotic response element. In Callorhinus ursinus (Northern fur seal), this protein is Nuclear receptor subfamily 1 group I member 3 (NR1I3).